The sequence spans 200 residues: Imidazole glycerol phosphate synthase subunit HisH (200 aa).

The Glutamine amidotransferase type-1 domain occupies 2–200 (KVAIVEYGVG…LGEVLTGASR (199 aa)). The Nucleophile role is filled by Cys79. Residues His179 and Glu181 contribute to the active site.

Heterodimer of HisH and HisF.

The protein resides in the cytoplasm. The enzyme catalyses 5-[(5-phospho-1-deoxy-D-ribulos-1-ylimino)methylamino]-1-(5-phospho-beta-D-ribosyl)imidazole-4-carboxamide + L-glutamine = D-erythro-1-(imidazol-4-yl)glycerol 3-phosphate + 5-amino-1-(5-phospho-beta-D-ribosyl)imidazole-4-carboxamide + L-glutamate + H(+). It catalyses the reaction L-glutamine + H2O = L-glutamate + NH4(+). The protein operates within amino-acid biosynthesis; L-histidine biosynthesis; L-histidine from 5-phospho-alpha-D-ribose 1-diphosphate: step 5/9. IGPS catalyzes the conversion of PRFAR and glutamine to IGP, AICAR and glutamate. The HisH subunit catalyzes the hydrolysis of glutamine to glutamate and ammonia as part of the synthesis of IGP and AICAR. The resulting ammonia molecule is channeled to the active site of HisF. This chain is Imidazole glycerol phosphate synthase subunit HisH, found in Methanopyrus kandleri (strain AV19 / DSM 6324 / JCM 9639 / NBRC 100938).